The sequence spans 261 residues: Thioesterase AMT4 (261 aa).

This sequence belongs to the AMT4 thioesterase family.

It participates in mycotoxin biosynthesis. Its function is as follows. Thioesterase; part of the gene clusters that mediate the biosynthesis of AM-toxins, host-selective toxins (HSTs) causing Alternaria blotch on apple, a worldwide distributed disease. AM-toxins are cyclic depsipeptides containing the 3 residues 2-hydroxy-isovaleric acid (2-HIV), dehydroalanine, L-alanine which are common for all 3 AM-toxins I to III. The fourth precursor is L-alpha-amino-methoxyphenyl-valeric acid (L-Amv) for AM-toxin I, L-alpha-amino-phenyl-valeric acid (L-Apv) for AM-toxin II, and L-alpha-amino-hydroxyphenyl-valeric acid (L-Ahv) for AM-toxin III. AM-toxins have two target sites for affecting susceptible apple cells; they cause invagination of the plasma membrane and electrolyte loss and chloroplast disorganization. The non-ribosomal peptide synthetase AMT1 contains 4 catalytic modules and is responsible for activation of each residue in AM-toxin. The aldo-keto reductase AMT2 catalyzes the conversion of 2-keto-isovaleric acid (2-KIV) to 2-hydroxy-isovaleric acid (2-HIV), one of the precursor residues incorporated by AMT1 during AM-toxin biosynthesis, by reduction of its ketone to an alcohol. The cytochrome P450 monooxygenase AMT3 and the thioesterase AMT4 are also important for AM-toxin production, but their exact function within the AM-toxin biosynthesis are not known yet. Up to 21 proteins (including AMT1 to AMT4) are predicted to be involved in AM-toxin biosynthesis since their expression ishighly up-regulated in AM-toxin-producing cultures. The sequence is that of Thioesterase AMT4 from Alternaria alternata (Alternaria rot fungus).